The primary structure comprises 735 residues: Transmembrane channel-like protein 7 (735 aa).

At 1–164 (MSEFGAGAEL…QSYFSFLRFL (164 aa)) the chain is on the extracellular side. A helical membrane pass occupies residues 165–185 (VLLNFLMFILMFSFVTLPAVI). The Cytoplasmic portion of the chain corresponds to 186–233 (SNYGIFNSSSTKISPNNTEPYCTVYTPSGNKGLVYFYTYLKDLLTGTG). A helical membrane pass occupies residues 234 to 254 (FLEVTVLFYGYYTIDAAWFSV). Over 255-258 (LRYN) the chain is Extracellular. The helical transmembrane segment at 259 to 279 (LPLAYLLTTFAYLALSFVWII) threads the bilayer. The Cytoplasmic segment spans residues 280–355 (KRSVERFRQH…TMKEKLQIYS (76 aa)). A helical membrane pass occupies residues 356–376 (LRIFINIIVIAVLSGCFYSIY). Over 377–403 (RATVFSQENSSVSIRRNVMIANLLVQY) the chain is Extracellular. Residue Asn385 is glycosylated (N-linked (GlcNAc...) asparagine). Residues 404-424 (LPSIVITSANFIAPQIFSFLI) traverse the membrane as a helical segment. At 425 to 436 (RFEDYSAAFEIR) the chain is on the cytoplasmic side. A helical membrane pass occupies residues 437–457 (LTLIRCVFVRLANVGVLLFSL). Over 458–488 (WSQIHCDNDQCKACGYDYELYPCWESAVGQE) the chain is Extracellular. Residues 489–509 (MYKLLIFDFMIIIAMTLFVDF) traverse the membrane as a helical segment. The Cytoplasmic segment spans residues 510-548 (PRKLLVTYCSWKLVQWWGLQEFGISDNVLEIIYGQTICW). The chain crosses the membrane as a helical span at residues 549 to 569 (IGTFFSPLLPAIATIKYFIIF). Residues 570 to 594 (YIKKISLIHTRKPASRPIRASSSNF) lie on the Extracellular side of the membrane. The chain crosses the membrane as a helical span at residues 595–615 (FFLAVLLIGLILAFVPLGVSI). The Cytoplasmic segment spans residues 616–634 (ALISSSKACGPFRNFNTSW). Residues 635 to 655 (AIVPYTILEFPIGLQKFLYGI) traverse the membrane as a helical segment. Residues 656-658 (ASE) are Extracellular-facing. Residues 659–679 (AFAVPFFVIACLFMFYFIALA) form a helical membrane-spanning segment. Over 680–735 (GAHKRVVEQLREQLVTESRDKLFLLEKLSEAQKNSGKPQKARKLTSSWLLEPLDKG) the chain is Cytoplasmic. The segment at 710-735 (AQKNSGKPQKARKLTSSWLLEPLDKG) is disordered.

It belongs to the TMC family.

Its subcellular location is the membrane. Functionally, probable component of an ion channel. In Gallus gallus (Chicken), this protein is Transmembrane channel-like protein 7 (Tmc7).